A 31-amino-acid polypeptide reads, in one-letter code: MLTITSYFGFLLVVLIITSSLFIGLSKIRLI.

A helical membrane pass occupies residues 4-24 (ITSYFGFLLVVLIITSSLFIG).

Belongs to the PetL family. In terms of assembly, the 4 large subunits of the cytochrome b6-f complex are cytochrome b6, subunit IV (17 kDa polypeptide, PetD), cytochrome f and the Rieske protein, while the 4 small subunits are PetG, PetL, PetM and PetN. The complex functions as a dimer.

It is found in the plastid. Its subcellular location is the chloroplast thylakoid membrane. Component of the cytochrome b6-f complex, which mediates electron transfer between photosystem II (PSII) and photosystem I (PSI), cyclic electron flow around PSI, and state transitions. PetL is important for photoautotrophic growth as well as for electron transfer efficiency and stability of the cytochrome b6-f complex. The sequence is that of Cytochrome b6-f complex subunit 6 from Glycine max (Soybean).